Here is a 498-residue protein sequence, read N- to C-terminus: Probable global transactivator (498 aa).

In terms of domain architecture, Helicase ATP-binding spans 43 to 206; the sequence is RERRGRPHGG…YAIIHFLRCR (164 aa). 55–63 provides a ligand contact to ATP; that stretch reads ADDMGLGKT. The DEAH box motif lies at 157–160; the sequence is DEAH. Residues 337-493 form the Helicase C-terminal domain; it reads ELVQRVLDTP…RTALNYEDIK (157 aa).

It belongs to the SNF2/RAD54 helicase family.

The polypeptide is Probable global transactivator (GTA) (Orgyia pseudotsugata (Douglas-fir tussock moth)).